A 120-amino-acid chain; its full sequence is Large ribosomal subunit protein uL18 (120 aa).

This sequence belongs to the universal ribosomal protein uL18 family. In terms of assembly, part of the 50S ribosomal subunit; part of the 5S rRNA/L5/L18/L25 subcomplex. Contacts the 5S and 23S rRNAs.

Functionally, this is one of the proteins that bind and probably mediate the attachment of the 5S RNA into the large ribosomal subunit, where it forms part of the central protuberance. This Staphylococcus epidermidis (strain ATCC 35984 / DSM 28319 / BCRC 17069 / CCUG 31568 / BM 3577 / RP62A) protein is Large ribosomal subunit protein uL18.